The primary structure comprises 496 residues: Glutamyl-tRNA(Gln) amidotransferase subunit A (496 aa).

Catalysis depends on charge relay system residues lysine 75 and serine 150. The active-site Acyl-ester intermediate is the serine 174.

This sequence belongs to the amidase family. GatA subfamily. Heterotrimer of A, B and C subunits.

The catalysed reaction is L-glutamyl-tRNA(Gln) + L-glutamine + ATP + H2O = L-glutaminyl-tRNA(Gln) + L-glutamate + ADP + phosphate + H(+). Allows the formation of correctly charged Gln-tRNA(Gln) through the transamidation of misacylated Glu-tRNA(Gln) in organisms which lack glutaminyl-tRNA synthetase. The reaction takes place in the presence of glutamine and ATP through an activated gamma-phospho-Glu-tRNA(Gln). In Burkholderia ambifaria (strain MC40-6), this protein is Glutamyl-tRNA(Gln) amidotransferase subunit A.